The sequence spans 355 residues: Peptide chain release factor 1 (355 aa).

Gln231 is subject to N5-methylglutamine.

The protein belongs to the prokaryotic/mitochondrial release factor family. In terms of processing, methylated by PrmC. Methylation increases the termination efficiency of RF1.

The protein localises to the cytoplasm. Peptide chain release factor 1 directs the termination of translation in response to the peptide chain termination codons UAG and UAA. This chain is Peptide chain release factor 1, found in Aliarcobacter butzleri (strain RM4018) (Arcobacter butzleri).